A 442-amino-acid polypeptide reads, in one-letter code: Histidine--tRNA ligase (442 aa).

The protein belongs to the class-II aminoacyl-tRNA synthetase family. As to quaternary structure, homodimer.

The protein localises to the cytoplasm. It carries out the reaction tRNA(His) + L-histidine + ATP = L-histidyl-tRNA(His) + AMP + diphosphate + H(+). The protein is Histidine--tRNA ligase of Helicobacter pylori (strain HPAG1).